The primary structure comprises 772 residues: Gelsolin (772 aa).

Positions 1–17 (LGALVVALCALSPPARA) are cleaved as a signal peptide. Positions 18–33 (ATASRGAPQARAPQGR) are excised as a propeptide. Residues 19–38 (TASRGAPQARAPQGRVSPMR) form a disordered region. An actin-severing region spans residues 41-166 (TMVVEHPEFL…YKKGGVASGF (126 aa)). One copy of the Gelsolin-like 1 repeat lies at 66-148 (FDLVPVPPNL…VQGFESATFL (83 aa)). A Phosphotyrosine modification is found at Tyr76. Ca(2+)-binding residues include Gly82, Asp83, Glu114, Asp126, Gly131, and Ala133. The interval 113-116 (DESG) is actin-actin interfilament contact point. Position 152–159 (152–159 (KSGLKYKK)) interacts with a 1,2-diacyl-sn-glycero-3-phospho-(1D-myo-inositol-4,5-bisphosphate). Val162 lines the Ca(2+) pocket. 178–186 (RLFQVKGRR) contributes to the a 1,2-diacyl-sn-glycero-3-phospho-(1D-myo-inositol-4,5-bisphosphate) binding site. The stretch at 188-260 (VRATEVPVSW…SEEDAEPAGM (73 aa)) is one Gelsolin-like 2 repeat. Gly203 and Asp204 together coordinate Ca(2+). Cysteines 205 and 218 form a disulfide. Residues Glu226, Asp276, Glu319, Asp320, and Glu344 each contribute to the Ca(2+) site. The Gelsolin-like 3 repeat unit spans residues 307–379 (DENPFAQGAL…LPEGGETPLF (73 aa)). Residues Tyr399 and Tyr455 each carry the phosphotyrosine modification. An actin-binding, Ca-sensitive region spans residues 424–772 (AAQHGMDDDG…LDRAIAELAA (349 aa)). The stretch at 445 to 526 (SNKVPVDPAT…VQGKEPAHLM (82 aa)) is one Gelsolin-like 4 repeat. Ca(2+)-binding residues include Gly461, Asp462, Glu492, Asp504, Gly509, Pro511, and Thr541. Residues 567 to 632 (RAVEVIPKAG…AEGSEPDSFW (66 aa)) form a Gelsolin-like 5 repeat. Position 574 is an N6-acetyllysine (Lys574). Residues Asn581 and Asp582 each coordinate Ca(2+). The residue at position 593 (Tyr593) is a Phosphotyrosine. A Ca(2+)-binding site is contributed by Glu604. Residue Tyr641 is modified to Phosphotyrosine. Residues 671–746 (VEEVPGELMQ…VKQGFEPPSF (76 aa)) form a Gelsolin-like 6 repeat. Ca(2+) is bound by residues Asp686, Asp687, and Glu709. A Phosphothreonine modification is found at Thr732.

The protein belongs to the villin/gelsolin family. In terms of assembly, binds to actin and to fibronectin. Identified in a complex composed of ACTA1, COBL, GSN and TMSB4X. Interacts with the inactive form of EIF2AK2/PKR. Interacts with FLII. In terms of processing, phosphorylated on tyrosine residues in vitro.

The protein resides in the cytoplasm. Its subcellular location is the cytoskeleton. It is found in the secreted. In terms of biological role, calcium-regulated, actin-modulating protein that binds to the plus (or barbed) ends of actin monomers or filaments, preventing monomer exchange (end-blocking or capping). It can promote the assembly of monomers into filaments (nucleation) as well as sever filaments already formed. Plays a role in ciliogenesis. In Sus scrofa (Pig), this protein is Gelsolin (GSN).